We begin with the raw amino-acid sequence, 293 residues long: 4-diphosphocytidyl-2-C-methyl-D-erythritol kinase (293 aa).

Lysine 16 is an active-site residue. 99–109 contacts ATP; sequence PMGAGLGGGSS. Aspartate 141 is an active-site residue.

Belongs to the GHMP kinase family. IspE subfamily.

It carries out the reaction 4-CDP-2-C-methyl-D-erythritol + ATP = 4-CDP-2-C-methyl-D-erythritol 2-phosphate + ADP + H(+). It participates in isoprenoid biosynthesis; isopentenyl diphosphate biosynthesis via DXP pathway; isopentenyl diphosphate from 1-deoxy-D-xylulose 5-phosphate: step 3/6. Functionally, catalyzes the phosphorylation of the position 2 hydroxy group of 4-diphosphocytidyl-2C-methyl-D-erythritol. This chain is 4-diphosphocytidyl-2-C-methyl-D-erythritol kinase, found in Burkholderia ambifaria (strain MC40-6).